The following is a 695-amino-acid chain: Follicle-stimulating hormone receptor (695 aa).

The first 17 residues, 1–17 (MTFLLVSLLAFLSLGSG), serve as a signal peptide directing secretion. 2 disulfides stabilise this stretch: Cys-18–Cys-25 and Cys-23–Cys-32. One can recognise an LRRNT domain in the interval 18-46 (CHHRICHCWHRVFLCQESKVTEIPSDLPR). The Extracellular segment spans residues 18–366 (CHHRICHCWH…EDIMGYDILR (349 aa)). 9 LRR repeats span residues 49-72 (VELR…FGDL), 73-97 (EKIE…LSKL), 98-118 (HEIR…AFQN), 119-143 (LPNL…KIQS), 144-169 (LQKV…MGLS), 170-192 (FESM…AFNG), 193-216 (TQLD…VFQG), 217-240 (ASGP…GLEN), and 241-259 (IKKL…PSLD). Residue Asn-93 is glycosylated (N-linked (GlcNAc...) asparagine). N-linked (GlcNAc...) asparagine glycosylation is found at Asn-191 and Asn-199. 4 disulfide bridges follow: Cys-275–Cys-346, Cys-276–Cys-292, Cys-276–Cys-356, and Cys-292–Cys-338. N-linked (GlcNAc...) asparagine glycosylation occurs at Asn-293. Sulfotyrosine is present on Tyr-335. The chain crosses the membrane as a helical span at residues 367-387 (VLIWFISILAITGNIIVLMIL). Topologically, residues 388–398 (ITSQYKLTVPR) are cytoplasmic. A helical transmembrane segment spans residues 399 to 419 (FLMCNLAFADLCIGIYLLLIA). Residues 420–444 (SVDIYTKSQYHNYAIDWQTGAGCDA) are Extracellular-facing. The chain crosses the membrane as a helical span at residues 445–465 (AGFFTVFASELSVYTLTVITL). Residues 466–487 (ERWHTITHAMQLECKVQLRHAA) are Cytoplasmic-facing. The helical transmembrane segment at 488–508 (IIMLLGWIFAFMVALFPIFGI) threads the bilayer. Residues 509-528 (SSYMKVSICLPMDIDSPLSQ) are Extracellular-facing. A helical membrane pass occupies residues 529–550 (LYVMSLLVLNVLAFVVICCCYA). The Cytoplasmic segment spans residues 551 to 573 (HIYLTVRNPNIVSSSSDTKIAKR). The chain crosses the membrane as a helical span at residues 574 to 594 (MAMLIFTDFLCMAPISFFAIS). Topologically, residues 595–608 (ASLKVPLITVSKSK) are extracellular. The helical transmembrane segment at 609 to 629 (ILLVLFYPINSCANPFLYAIF) threads the bilayer. The Cytoplasmic segment spans residues 630 to 695 (TKNFRRDFFI…LIPLRHLAKN (66 aa)).

It belongs to the G-protein coupled receptor 1 family. FSH/LSH/TSH subfamily. Homotrimer. Functions as a homotrimer binding the FSH hormone heterodimer composed of CGA and FSHB. Interacts with ARRB2. Interacts with APPL2; interaction is independent of follicle stimulating hormone stimulation. Post-translationally, N-glycosylated; indirectly required for FSH-binding, possibly via a conformational change that allows high affinity binding of hormone. Sulfated.

Its subcellular location is the cell membrane. In terms of biological role, g protein-coupled receptor for follitropin, the follicle-stimulating hormone. Through cAMP production activates the downstream PI3K-AKT and ERK1/ERK2 signaling pathways. This is Follicle-stimulating hormone receptor (FSHR) from Felis catus (Cat).